Consider the following 1085-residue polypeptide: Tudor domain-containing protein 7B (1085 aa).

In terms of domain architecture, HTH OST-type 1 spans 3–76 (DEELVKKMVR…SGEVMCHATT (74 aa)). Disordered stretches follow at residues 112–183 (APLV…PEKR), 200–228 (RNPQ…SAPY), and 297–341 (PAKE…KALS). Residues 203–216 (QHINVPSNLNENTT) are compositionally biased toward polar residues. The HTH OST-type 2 domain occupies 229–299 (SPKLVQSRLQ…PQELLLYPAK (71 aa)). The span at 322-335 (TQRPSLTAKSNTPE) shows a compositional bias: polar residues. Residues 340–410 (LSPDLKQKLG…PKRAILYAKV (71 aa)) enclose the HTH OST-type 3 domain. 2 Tudor domains span residues 496–554 (SPSP…FYRL) and 686–743 (RPFC…LLRD). Residues 843 to 853 (NVPTATQTSSL) are compositionally biased toward polar residues. Positions 843–888 (NVPTATQTSSLKTDRGDKALHTPKKTSPPLGSKSTPAGSPPERLSL) are disordered.

The protein resides in the cytoplasm. Component of specific cytoplasmic RNA granules involved in post-transcriptional regulation of specific genes: probably acts by binding to specific mRNAs and regulating their translation. Probably required during spermatogenesis. The chain is Tudor domain-containing protein 7B (tdrd7b) from Danio rerio (Zebrafish).